Reading from the N-terminus, the 239-residue chain is tRNA (guanine-N(1)-)-methyltransferase (239 aa).

Residues glycine 113 and 137-142 (LGDYVL) contribute to the S-adenosyl-L-methionine site.

This sequence belongs to the RNA methyltransferase TrmD family. Homodimer.

The protein localises to the cytoplasm. It catalyses the reaction guanosine(37) in tRNA + S-adenosyl-L-methionine = N(1)-methylguanosine(37) in tRNA + S-adenosyl-L-homocysteine + H(+). Its function is as follows. Specifically methylates guanosine-37 in various tRNAs. This Cutibacterium acnes (strain DSM 16379 / KPA171202) (Propionibacterium acnes) protein is tRNA (guanine-N(1)-)-methyltransferase.